The primary structure comprises 739 residues: tRNA 5-methylaminomethyl-2-thiouridine biosynthesis bifunctional protein MnmC (739 aa).

The tRNA (mnm(5)s(2)U34)-methyltransferase stretch occupies residues 1 to 282 (MDKVTPAKLS…KREMLTATKL (282 aa)). Residues 330–739 (IGAGVCGLMA…HRSSLKKPLS (410 aa)) are FAD-dependent cmnm(5)s(2)U34 oxidoreductase.

The protein in the N-terminal section; belongs to the methyltransferase superfamily. tRNA (mnm(5)s(2)U34)-methyltransferase family. It in the C-terminal section; belongs to the DAO family. Requires FAD as cofactor.

Its subcellular location is the cytoplasm. It catalyses the reaction 5-aminomethyl-2-thiouridine(34) in tRNA + S-adenosyl-L-methionine = 5-methylaminomethyl-2-thiouridine(34) in tRNA + S-adenosyl-L-homocysteine + H(+). Functionally, catalyzes the last two steps in the biosynthesis of 5-methylaminomethyl-2-thiouridine (mnm(5)s(2)U) at the wobble position (U34) in tRNA. Catalyzes the FAD-dependent demodification of cmnm(5)s(2)U34 to nm(5)s(2)U34, followed by the transfer of a methyl group from S-adenosyl-L-methionine to nm(5)s(2)U34, to form mnm(5)s(2)U34. The chain is tRNA 5-methylaminomethyl-2-thiouridine biosynthesis bifunctional protein MnmC from Psychrobacter sp. (strain PRwf-1).